We begin with the raw amino-acid sequence, 547 residues long: Chaperonin GroEL (547 aa).

ATP-binding positions include 30–33, Lys51, 87–91, Gly415, 479–481, and Asp495; these read TLGP, DGTTT, and NAA.

The protein belongs to the chaperonin (HSP60) family. In terms of assembly, forms a cylinder of 14 subunits composed of two heptameric rings stacked back-to-back. Interacts with the co-chaperonin GroES.

It localises to the cytoplasm. The enzyme catalyses ATP + H2O + a folded polypeptide = ADP + phosphate + an unfolded polypeptide.. Functionally, together with its co-chaperonin GroES, plays an essential role in assisting protein folding. The GroEL-GroES system forms a nano-cage that allows encapsulation of the non-native substrate proteins and provides a physical environment optimized to promote and accelerate protein folding. This Polynucleobacter necessarius subsp. necessarius (strain STIR1) protein is Chaperonin GroEL.